A 314-amino-acid polypeptide reads, in one-letter code: MVVCGETMKLVSLGVMLIGTILSVSSEELVGVWLGLELNLYGFLVIMNPDGHYSPEPCVKYFVVQSTGSILMLVGFVSLMEQHVVSGLVMSTAXTVLKSGVFPLHSWVPSVIKNSSWLASGLMLTWQKVAPLVFLSMILPSKSLWVVIVSMAGIGAVGGLNQNSVRVMSAYSSFVHTSWMLLGLTWSSVVFVGYFAVYSLSVGLFFYGCSLMNKMSMGSQLSSAASGMGLLMLMGMPPFLGFLAKVLVFLMSGSPVIVACIMGSVISLKFYIDFFYSMVMKSLVDKNKVEVKAIWSLVICMNIMGGALILVSFI.

The next 9 membrane-spanning stretches (helical) occupy residues 13–35 (LGVM…VWLG), 61–80 (YFVV…VSLM), 85–107 (VSGL…LHSW), 117–139 (WLAS…SMIL), 144–166 (LWVV…NSVR), 189–209 (VVFV…FYGC), 224–244 (AASG…GFLA), 246–266 (VLVF…GSVI), and 294–314 (IWSL…VSFI).

The protein belongs to the complex I subunit 2 family.

Its subcellular location is the mitochondrion inner membrane. It catalyses the reaction a ubiquinone + NADH + 5 H(+)(in) = a ubiquinol + NAD(+) + 4 H(+)(out). Core subunit of the mitochondrial membrane respiratory chain NADH dehydrogenase (Complex I) that is believed to belong to the minimal assembly required for catalysis. Complex I functions in the transfer of electrons from NADH to the respiratory chain. The immediate electron acceptor for the enzyme is believed to be ubiquinone. The protein is NADH-ubiquinone oxidoreductase chain 2 (ND2) of Mytilus edulis (Blue mussel).